Consider the following 270-residue polypeptide: MEELEKTQKFQKKKKQQQEKQDQSSPINFEMSSRSSLHSLPQTTIESPPDSPTLSSIPDSHGSSPHTIIPTPSVAKTETPFRVTNGEEEKKVSESRRQLRPSFSSSSSTPRESKWASLIRKALLGFRVIAFVSCLVSFSVMVSDRDKGWAHDSFYNYKEFRFCLAANVIGFVYSGFMICDLVYLLSTSIRRSRHNLRHFLEFGLDQMLAYLLASASTSASIRVDDWQSNWGADKFPDLARASVALSYVSFVAFAFCSLASGYALCALRSI.

Positions 1 to 110 (MEELEKTQKF…PSFSSSSSTP (110 aa)) are disordered. The Cytoplasmic segment spans residues 1–121 (MEELEKTQKF…ESKWASLIRK (121 aa)). The segment covering 24–66 (SSPINFEMSSRSSLHSLPQTTIESPPDSPTLSSIPDSHGSSPH) has biased composition (polar residues). Basic and acidic residues predominate over residues 85–97 (NGEEEKKVSESRR). Residues 100–110 (RPSFSSSSSTP) are compositionally biased toward low complexity. A helical transmembrane segment spans residues 122 to 142 (ALLGFRVIAFVSCLVSFSVMV). Over 143 to 161 (SDRDKGWAHDSFYNYKEFR) the chain is Extracellular. Residues 162–182 (FCLAANVIGFVYSGFMICDLV) form a helical membrane-spanning segment. Residues 183 to 198 (YLLSTSIRRSRHNLRH) are Cytoplasmic-facing. The chain crosses the membrane as a helical span at residues 199–221 (FLEFGLDQMLAYLLASASTSASI). At 222-246 (RVDDWQSNWGADKFPDLARASVALS) the chain is on the extracellular side. Residues 247-267 (YVSFVAFAFCSLASGYALCAL) form a helical membrane-spanning segment. Residues 268–270 (RSI) lie on the Cytoplasmic side of the membrane.

It belongs to the Casparian strip membrane proteins (CASP) family. As to quaternary structure, homodimer and heterodimers.

The protein resides in the cell membrane. The polypeptide is CASP-like protein 4A1 (Arabidopsis thaliana (Mouse-ear cress)).